Reading from the N-terminus, the 842-residue chain is Serine/threonine-protein kinase CLA4 (842 aa).

The interval 12-34 (DNDFQNIGPAPRPPSSNSQGRTC) is disordered. A phosphoserine mark is found at Ser29 and Ser46. The 119-residue stretch at 61–179 (SKKKSGWVSY…WLDAIFAKCP (119 aa)) folds into the PH domain. The CRIB domain occupies 184-197 (VSSPTNFTHKVHVG). A compositionally biased stretch (polar residues) spans 247-274 (GNPTNTLDKPQSGETSSSQKSLPNSYND). Residues 247–524 (GNPTNTLDKP…KPKKPARPTM (278 aa)) form a disordered region. The span at 279-296 (NNSVNSKSSSGVSSSMVS) shows a compositional bias: low complexity. Positions 297-307 (QRKTSQPPNTK) are enriched in polar residues. Residues 308–319 (SPVSLGSGSLPP) are compositionally biased toward low complexity. Positions 323 to 343 (KLPTSQSNIPRHLQNVPNQQY) are enriched in polar residues. 2 positions are modified to phosphoserine: Ser351 and Ser367. Residues 372 to 387 (QQQQQQQQQQKQQHQQ) are compositionally biased toward low complexity. Pro residues predominate over residues 396–408 (SPSPSPSPSPLNP). The segment covering 418–435 (PYSKQPQSPLSSQSTQNQ) has biased composition (low complexity). A Phosphoserine modification is found at Ser425. 2 stretches are compositionally biased toward polar residues: residues 470-481 (PSNQNATSNTHV) and 488-497 (NDQSTPQTMR). In terms of domain architecture, Protein kinase spans 546-825 (FKVIEKAGQG…TEELLHHGFF (280 aa)). ATP-binding positions include 552 to 560 (AGQGASGSV) and Lys594. Catalysis depends on Asp693, which acts as the Proton acceptor.

It belongs to the protein kinase superfamily. STE Ser/Thr protein kinase family. STE20 subfamily. In terms of assembly, interacts with CDC42.

The enzyme catalyses L-seryl-[protein] + ATP = O-phospho-L-seryl-[protein] + ADP + H(+). It carries out the reaction L-threonyl-[protein] + ATP = O-phospho-L-threonyl-[protein] + ADP + H(+). Involved in budding and cytokinesis. The chain is Serine/threonine-protein kinase CLA4 (CLA4) from Saccharomyces cerevisiae (strain ATCC 204508 / S288c) (Baker's yeast).